A 212-amino-acid polypeptide reads, in one-letter code: Large ribosomal subunit protein bL25 (212 aa).

Positions Ile-190–Glu-212 are disordered.

It belongs to the bacterial ribosomal protein bL25 family. CTC subfamily. In terms of assembly, part of the 50S ribosomal subunit; part of the 5S rRNA/L5/L18/L25 subcomplex. Contacts the 5S rRNA. Binds to the 5S rRNA independently of L5 and L18.

Its function is as follows. This is one of the proteins that binds to the 5S RNA in the ribosome where it forms part of the central protuberance. This chain is Large ribosomal subunit protein bL25, found in Rhodopirellula baltica (strain DSM 10527 / NCIMB 13988 / SH1).